A 2321-amino-acid chain; its full sequence is Major viral transcription factor ICP4 homolog (2321 aa).

Disordered regions lie at residues 19–183, 296–329, 350–438, 954–1180, 1360–1392, 1597–1841, and 2277–2321; these read GIFP…SPPL, ILHT…PAPI, EFIQ…PSLG, MDDD…SGLA, DNSS…APPH, LLND…PSCY, and QHEE…TFTD. The span at 114–147 shows a compositional bias: low complexity; sequence SSNRPGGRNSSNGADESGESSSDRSPSYSPCDSY. 2 stretches are compositionally biased toward pro residues: residues 302-329 and 355-367; these read PTPP…PAPI and QSPP…PSPP. Over residues 368 to 389 the composition is skewed to low complexity; it reads AHSSSSCSPSHLAPSPLSSSPL. Positions 390–410 are enriched in pro residues; that stretch reads SSPPQLSPAPVSPPSSPPPLS. Composition is skewed to polar residues over residues 424-433 and 1002-1011; these read SISSQPQSCP and PRLTTPSSGR. Low complexity predominate over residues 1031-1093; it reads PETSPSNEHI…PSSPSSSRSP (63 aa). Residues 1151 to 1161 show a composition bias toward basic residues; it reads GGGRPRGRPPK. 2 stretches are compositionally biased toward polar residues: residues 1169-1180 and 1371-1389; these read NDIQVTSSSGLA and SKPS…QTTA. The span at 1630–1644 shows a compositional bias: low complexity; sequence STSSSQSASDKSPIK. Polar residues-rich tracts occupy residues 1720-1743 and 1801-1816; these read KAQT…QSSS and VGQT…HDIL. Positions 1817–1839 are enriched in low complexity; sequence SSSLPNRSCSSSPSPSKRPYHPS.

Belongs to the herpesviridae ICP4 family. A long stretch of serine residues may be a major site of phosphorylation.

Its subcellular location is the host nucleus. Its function is as follows. This IE protein is a multifunctional protein capable of migrating to the nucleus, binding to DNA, trans-activating other viral genes, and autoregulating its own synthesis. It is required for the switch from immediate-early to early mode of gene expression. This chain is Major viral transcription factor ICP4 homolog (MDV084), found in Gallus gallus (Chicken).